A 250-amino-acid polypeptide reads, in one-letter code: 7-cyano-7-deazaguanine synthase (250 aa).

28–38 (LSGGLDSATCV) lines the ATP pocket. Residues Cys-213, Cys-226, Cys-229, and Cys-232 each coordinate Zn(2+).

This sequence belongs to the QueC family. Zn(2+) serves as cofactor.

It carries out the reaction 7-carboxy-7-deazaguanine + NH4(+) + ATP = 7-cyano-7-deazaguanine + ADP + phosphate + H2O + H(+). Its pathway is purine metabolism; 7-cyano-7-deazaguanine biosynthesis. In terms of biological role, catalyzes the ATP-dependent conversion of 7-carboxy-7-deazaguanine (CDG) to 7-cyano-7-deazaguanine (preQ(0)). This is 7-cyano-7-deazaguanine synthase from Rhodopirellula baltica (strain DSM 10527 / NCIMB 13988 / SH1).